Consider the following 655-residue polypeptide: MKKILIGLIIGLFLFSSVNASVNLTEVQNAISIQQGINWAEVHNNTWYYPPYLGEMFISEYYFELLVLNWTHKSAFNATYFTERLLQTQFEDGSWEQVREQNLETGQLDATVFNYWYLKSINNNPKIEAALQKARKWIVAQGGIEATQTMTKFKLAAFGQYSWEDLWYVPLFIFKQNGIFKYTYVKDIVAQWVYPHLTALAYLRYQRTVFNVPVADLRELWINYPKNGIKISPREYSTLNPDSDLLILMDEIFKLKQPLGSFGAYTISTLLTLMSFKDFQSKHPHLYQNEIQKAYEDGYYFVEFNYFNFREAYHGSLDDGRWWDTILISWAMLESGQDKERIFPIVQNMVKEGLQPKKGIGYGYDFEYAPDTDDTGLLLVVMSYYKEAFQKQIPETIEWLFSMQNDDGGYPAFDKGKNEDNLLFKFAFNMAGIANSAEIFDPSCPDITGHIMEGLGEFGYQANHPQIQNMIKYQRKTQNKWGSWQARWGVNYIMAVGAVVPGLARVNYDLNEQWVQNSINYLLNKQNKDGGFGECVLSYNDPEKWNGIGKSTVTQTSWGLLALLEVYNQNEQIKHAADRAAQYLLDQFKRDDNTFYDHSTIGTGHRGLLYLQYPSYAQSFPLVALNRYQKISQGQYHFSKNLYNGNGEPVQKQNI.

A signal peptide spans 1–20 (MKKILIGLIIGLFLFSSVNA). N-linked (GlcNAc...) asparagine glycans are attached at residues Asn23, Asn44, Asn69, and Asn77. The active-site Proton donor is the Asp373. PFTB repeat units lie at residues 393-435 (IPET…GIAN) and 515-562 (VQNS…GLLA).

It belongs to the terpene cyclase/mutase family.

Its subcellular location is the membrane. The catalysed reaction is tetrahymanol = squalene + H2O. 2,3-iminosqualene and N,N-dimethyldodecylamine~N-oxlde are effective inhibitors with IC(50) values of 50 and 30 nM, respectively. In terms of biological role, squalene cyclase that catalyzes the oxygen-independent cyclization of squalene into tetrahymanol, a triterpenoid sterol with five cyclohexyl rings that is involved in membrane integrity, permeability and fluidity. The chain is Squalene-tetrahymanol cyclase THC1 from Tetrahymena thermophila (strain SB210).